The chain runs to 199 residues: Protein ASYMMETRIC LEAVES 2 (199 aa).

The 102-residue stretch at 8 to 109 (SPCAACKFLR…IDLSCAKSEL (102 aa)) folds into the LOB domain.

This sequence belongs to the LOB domain-containing protein family. Homo- and heterodimer with AS1. Interacts with AS1. Part of the AS1 repressor complex composed of AS1, LBD6/AS2 and HDA6. Interacts with LFR. As to expression, expressed in young shoots, roots, stems, leaves, flowers and adaxial domains of cotyledonary and leaves primordia.

Its subcellular location is the nucleus. Negative regulator of cell proliferation in the adaxial side of leaves. Regulates the formation of a symmetric lamina and the establishment of venation. Positively regulates LATERAL ORGAN BOUNDARIES (LOB) within the shoot apex, and the class III HD-ZIP genes REV, PHB, and PHV. Interacts directly with ASYMMETRIC LEAVES 1 (AS1) to repress the knox homeobox genes KNAT1, KNAT2, and KNAT6 and the abaxial determinants ARF3, KAN2 and YAB5. May act in parallel with the RDR6-SGS3-AGO7 pathway, an endogenous RNA silencing pathway, to regulate the leaf morphogenesis. Required for the binding of AS1 to the KNOX genes. Involved in leaf polarity establishment by functioning cooperatively with RH10 or RID2 to repress abaxial genes ARF3, ARF4, KAN1, KAN2, YAB1 and YAB5, and the knox homeobox genes KNAT1, KNAT2, KNAT6, and STM to promote adaxial development in leaf primordia at shoot apical meristems at high temperatures. The polypeptide is Protein ASYMMETRIC LEAVES 2 (Arabidopsis thaliana (Mouse-ear cress)).